Reading from the N-terminus, the 65-residue chain is Protein MalX (65 aa).

This chain is Protein MalX (malX), found in Klebsiella pneumoniae.